The following is a 258-amino-acid chain: Probable phthiotriol/phenolphthiotriol dimycocerosates methyltransferase 2 (258 aa).

It belongs to the methyltransferase superfamily. Phthiotriol/phenolphthiotriol dimycocerosates methyltransferase family.

Catalyzes the methylation of the lipid moiety of the intermediate compounds phthiotriol and glycosylated phenolphthiotriol dimycoserosates to form phthiocerol dimycocerosates (DIM A) and glycosylated phenolphthiocerol dimycocerosates (PGL). This chain is Probable phthiotriol/phenolphthiotriol dimycocerosates methyltransferase 2, found in Mycobacterium ulcerans (strain Agy99).